The chain runs to 425 residues: Adenosine 3'-phospho 5'-phosphosulfate transporter 1 (425 aa).

The next 9 helical transmembrane spans lie at 27–47, 102–122, 147–167, 232–252, 263–283, 303–323, 342–360, 365–387, and 391–411; these read FLIL…IYYV, VIIL…AMGV, TQFL…MILA, YSWF…LFLL, ITYT…FDAF, MMFG…IEQG, VFLL…YSTI, PIVF…TIMY, and LTFL…VDIH.

This sequence belongs to the nucleotide-sugar transporter family. SLC35B subfamily.

The protein resides in the golgi apparatus membrane. In terms of biological role, mediates the transport of adenosine 3'-phospho 5'-phosphosulfate (PAPS), from cytosol into Golgi. PAPS is a universal sulfuryl donor for sulfation events that take place in the Golgi. The chain is Adenosine 3'-phospho 5'-phosphosulfate transporter 1 (pst-1) from Caenorhabditis elegans.